Consider the following 205-residue polypeptide: MATQKEKPSSNSFKWFSTKTLKLNLSFQNRRRSPKSNSSSTLNSPRSNSDDNNNIKSHQASKEELRQVFSHFDSDGDGKISAFELRHYFGSVGEYISHEAAQEAINEVDTDADGSLGFEDFVGLMTRRDLYGDGEVDGDGELKTAFEMFEVEKGSGCITPKGLQKMLVKLGESRTYGECEAMIKFYDIDGNGILDFHEFRQMMTV.

A disordered region spans residues 26–55 (SFQNRRRSPKSNSSSTLNSPRSNSDDNNNI). Residues 35-54 (KSNSSSTLNSPRSNSDDNNN) are compositionally biased toward low complexity. EF-hand domains follow at residues 60–95 (ASKEELRQVFSHFDSDGDGKISAFELRHYFGSVGEY), 96–131 (ISHEAAQEAINEVDTDADGSLGFEDFVGLMTRRDLY), 137–173 (DGDGELKTAFEMFEVEKGSGCITPKGLQKMLVKLGES), and 174–205 (RTYGECEAMIKFYDIDGNGILDFHEFRQMMTV). Positions 73, 75, 77, 79, 84, 109, 111, 113, 115, and 120 each coordinate Ca(2+). Residues Asp187, Asp189, Asn191, and Glu198 each contribute to the Ca(2+) site.

In terms of biological role, potential calcium sensor. This chain is Probable calcium-binding protein CML41 (CML41), found in Arabidopsis thaliana (Mouse-ear cress).